A 216-amino-acid polypeptide reads, in one-letter code: Somatotropin (216 aa).

Positions 1–26 are cleaved as a signal peptide; sequence MAAGPRTSALLAFALLCLPWTREVGA. Zn(2+) is bound at residue His-45. Residues Cys-78 and Cys-189 are joined by a disulfide bond. A Phosphoserine modification is found at Ser-131. A Zn(2+)-binding site is contributed by Glu-198. A disulfide bridge links Cys-206 with Cys-214.

The protein belongs to the somatotropin/prolactin family.

The protein localises to the secreted. Plays an important role in growth control. Its major role in stimulating body growth is to stimulate the liver and other tissues to secrete IGF1. It stimulates both the differentiation and proliferation of myoblasts. It also stimulates amino acid uptake and protein synthesis in muscle and other tissues. This Sus scrofa (Pig) protein is Somatotropin (GH1).